A 402-amino-acid polypeptide reads, in one-letter code: uncharacterized protein (402 aa).

The interval 332-402 is disordered; sequence MFSSSSSSSE…PEPPPGKPGR (71 aa). The segment covering 370 to 379 has biased composition (polar residues); the sequence is SETTSLQQYS. Positions 393–402 are enriched in pro residues; that stretch reads PEPPPGKPGR.

This is an uncharacterized protein from Mus musculus (Mouse).